Consider the following 504-residue polypeptide: MDTSVLNPELQIHGFIGVDSLQSSRKRKNDFDDFPLNKGLKTNNNDYSGSIEPKFSPALSIKEDGKNDRNFEALMSLQAQDSNLSEQNTSIHLDALASSSIALGNDNVDSSAFLSKVNKGVNAMRNSTSNQTNDSILISPSEITNMDPFLKGSARWTAEHWDYLERRMQNFCQTYSLDHTQVADSLHEKRLHGPLSSLVKLLVQEMPSFTRRTILRHLRALYNIPGYEKYSRKNSSGRGDFGVQETAIISQEVHNFIMDQGWSEYQFCNQIWAGKCPKTIRMFYSNLYKKLSHRDAKSIYHHVRRAYNPFEDRCVWSKEEDEELRKNVVEHGKCWTKIGRKMARMPNDCRDRWRDVVRFGDKLKRNAWSLEEETQLLQIVAELRNREDLSSDINWTLVAQMLGTRTRLQCRYKFQQLTKAASKFELQENVWLLERIYDSLLNNGGKIHWENIVKEANGRWTRDQMLFQFINLKKMIPSYDNLPLLEATKSAIDDFKVVLSGFSN.

Positions 30–51 (DFDDFPLNKGLKTNNNDYSGSI) are disordered. 2 HTH myb-type domains span residues 308 to 361 (NPFE…RFGD) and 362 to 422 (KLKR…KAAS). 2 consecutive DNA-binding regions (H-T-H motif) follow at residues 335–357 (WTKIGRKMARMPNDCRDRWRDVV) and 395–418 (WTLVAQMLGTRTRLQCRYKFQQLT).

It localises to the nucleus. DNA-binding protein that recognizes sites within both the enhancer and the promoter of rRNA transcription, as well as upstream of many genes transcribed by RNA polymerase II. Has a role in the termination of RNA polymerase I catalyzed transcription. This is DNA-binding protein reb1 (reb1) from Schizosaccharomyces pombe (strain 972 / ATCC 24843) (Fission yeast).